The following is an 880-amino-acid chain: EP-cadherin (880 aa).

The first 28 residues, 1-28 (MGSTRLRNASVWLCGLLCLLQVVPSINA), serve as a signal peptide directing secretion. A propeptide spanning residues 29–155 (DVSGCKPGFS…THTGLKRKKR (127 aa)) is cleaved from the precursor. N61 carries N-linked (GlcNAc...) asparagine glycosylation. Cadherin domains lie at 156 to 263 (DWVI…RPKF), 264 to 376 (TQDV…APIF), 377 to 487 (DPKT…APFF), 488 to 593 (VPAV…DNGP), and 594 to 704 (VPSP…GFDL). Residues 156–703 (DWVIPPIKVS…CQEKLVGGFD (548 aa)) are Extracellular-facing. T343, T382, and T400 each carry an O-linked (GalNAc...) threonine glycan. Residue N425 is glycosylated (N-linked (GlcNAc...) asparagine). T428, T469, T471, T473, and T475 each carry an O-linked (GalNAc...) threonine glycan. The N-linked (GlcNAc...) asparagine glycan is linked to N558. O-linked (GalNAc...) threonine glycans are attached at residues T562, T576, T578, and T580. 2 cysteine pairs are disulfide-bonded: C603-C687 and C685-C694. N681 carries N-linked (GlcNAc...) asparagine glycosylation. The chain crosses the membrane as a helical span at residues 704–728 (LPIILVILGSVLALLILFLLLLLFL). Residues 729–880 (KRKKVVKEPL…DMYGGDDDEE (152 aa)) are Cytoplasmic-facing. A disordered region spans residues 790 to 826 (PAPHYRPRPSNPDEIGNFIDENLDAADNDPTAPPYDS).

As to quaternary structure, interacts with CTNNB1.

Its subcellular location is the cell membrane. Its function is as follows. Cadherins are calcium-dependent cell adhesion proteins. They preferentially interact with themselves in a homophilic manner in connecting cells; cadherins may thus contribute to the sorting of heterogeneous cell types. In Xenopus laevis (African clawed frog), this protein is EP-cadherin.